A 298-amino-acid polypeptide reads, in one-letter code: Short-chain dehydrogenase reductase 4 (298 aa).

50–74 is an NAD(+) binding site; that stretch reads IITGGASGIGAEAVRLFTDHGAKVV. S182 is a binding site for substrate. Y195 functions as the Proton acceptor in the catalytic mechanism.

This sequence belongs to the short-chain dehydrogenases/reductases (SDR) family.

The polypeptide is Short-chain dehydrogenase reductase 4 (SDR4) (Arabidopsis thaliana (Mouse-ear cress)).